The chain runs to 668 residues: MVCGLTSCLGSGAAGGLFSSAVQFFAATQCLVGETWPKDSVLQNGSRYDFIIVGAGTAGSALAARLSEVANFSVLLLEAGGDPPIEAIIPAFRETLKASSVDWNFTSVENNITSQALKRGIEQQPRGKMLGGSGSLNHMVYARGFPSDYHEWASIAGETWNWTNVLKYFMKTEHMTDTNIVNNPELMVYHGRGGAIEVSGTNEVMFSIKKFLQAFEELGFKTVPDMTYPNSIGAGCFSHTIRNGERDSSLRALLNNANSTSLHILKDTFVTKIIIENGTAIGIEAVKDDKTFLFYADREVILSAGTFNTPKLLMLSGVGRSEHLRSLGIDVVADLPVGSNLHDHAMVLAFLVADNGTCVSDEAENSMEAIKYLYDRTGFLAKADNMAAYLPLSSSEPTVPEFALYPTCIPQFSPFRSGCLTLGLNEDLCTELHNLNQEYELVTIAAVLLKPKSRGKVELNSINPFDDPLIYAGTFSEEQDLDHFPRLIKMAWSIADTNYFRSKNARVIKPWVEACSNLTESAWIKCMSRAMVTSAWHSVGTAAMGTVVDGDLKVLGINGLRVVDASVMPKIIRGNTNAPVVMIAEIAADLIKEHYSVSRTGTNLNNMTIGNLTASSMPNISQPNINLADVIENNDMINSSLIEVEITNVEIITTTDRQSDIDDTVNVA.

FAD is bound by residues 137-140 (NHMV), valine 270, and 536-537 (WH). The active-site Proton acceptor is the histidine 537.

The protein belongs to the GMC oxidoreductase family. FAD serves as cofactor.

It catalyses the reaction ecdysone + O2 = 3-dehydroecdysone + H2O2. Its function is as follows. Involved in the inactivation of ecdysteroid molting hormones by converting ecdysteroids into 3-dehydroecdysteroids. The polypeptide is Ecdysone oxidase (Bombyx mori (Silk moth)).